A 6781-amino-acid chain; its full sequence is Replicase polyprotein 1ab (6781 aa).

In terms of domain architecture, CoV Nsp1 globular spans 2–109 (ASNHVTLAFA…ELELTFGRRG (108 aa)). Glu59, Asn95, Glu99, and Glu102 together coordinate ssDNA. One can recognise a CoV Nsp2 N-terminal domain in the interval 112–364 (IVPVDQYMCG…TKLKFDILSG (253 aa)). The CoV Nsp2 middle domain occupies 383–776 (SALVDIVDDA…AEMYNTYLST (394 aa)). Residues 778–895 (VENLVLAGVS…VPICFKKKGG (118 aa)) enclose the CoV Nsp2 C-terminal domain. One can recognise a Ubiquitin-like 1 domain in the interval 896-991 (GDVKFSDEVS…VMVSQWPLND (96 aa)). The interval 1009 to 1040 (IDSEGDEVDSSAPEKVADVANSEPGDDGLPVA) is disordered. The 240-residue stretch at 1057-1296 (SFIKDTPSTV…EPVVKPFYSY (240 aa)) folds into the Peptidase C16 1 domain. The active-site For PL1-PRO activity is Cys1091. The segment at 1162-1193 (CGCGTGERIYEGCAFRMTPTLEPFPYGACAQC) adopts a C4-type 1; degenerate zinc-finger fold. Residues His1239 and Asp1252 each act as for PL1-PRO activity in the active site. A Macro domain is found at 1297 to 1465 (KNVDFYQGDF…IFKEALVDTT (169 aa)). In terms of domain architecture, Ubiquitin-like 2 spans 1630-1685 (NKSVVIKVTEDTRSVKAVKVESTATYGQQIGPCLVNDTVVTDNKPVVADVVAKVVP). One can recognise a Peptidase C16 2 domain in the interval 1691–1951 (SHYGFDKAGE…LLDTMNYASE (261 aa)). The For PL2-PRO activity role is filled by Cys1729. The C4-type 2; degenerate zinc finger occupies 1808–1838 (DGCCCSKRVVTAPVVNASVLKLGVEDGLCPH). Residues His1888 and Asp1901 each act as for PL2-PRO activity in the active site. Helical transmembrane passes span 1959–1979 (FMSR…GLCF) and 2022–2042 (WFKV…LLFM). The HD1 stretch occupies residues 1959-2170 (FMSRNLITVF…FGDEIVVFFI (212 aa)). The 3Ecto domain maps to 2038 to 2102 (ALLFMTIRFT…TQVVWQHLRD (65 aa)). 2 disulfides stabilise this stretch: Cys2054–Cys2080 and Cys2072–Cys2077. 3 consecutive transmembrane segments (helical) span residues 2105–2125 (IGNV…GVYV), 2127–2147 (AITL…LGLQ), and 2150–2170 (IWFL…VFFI). A Y1 region spans residues 2176-2266 (MFIKHVCLGC…VVKLNVQPTG (91 aa)). The 341-residue stretch at 2176 to 2516 (MFIKHVCLGC…PTVCIANKKG (341 aa)) folds into the CoV Nsp3 Y domain. Residues His2180, Cys2185, Cys2190, Cys2193, Cys2226, His2229, Cys2233, and Cys2236 each contribute to the Zn(2+) site. The tract at residues 2180–2193 (HVCLGCDKASCVAC) is ZF1. Positions 2226–2236 (CKKHNFFCLNC) are ZF2. The Y2 stretch occupies residues 2267-2356 (PATILIDKVE…LVDSALLASL (90 aa)). Residues 2267–2516 (PATILIDKVE…PTVCIANKKG (250 aa)) are coV-Y. A Y3 region spans residues 2357–2414 (SVDFGASLHSAFVSVLSNSFGKDLSSCNDMQDCKSTLGFDDVPLDTFNAAVAEAHRYD). The interval 2415–2516 (VLLTDMSFNN…PTVCIANKKG (102 aa)) is Y4. 7 helical membrane passes run 2528–2548 (FFWF…FLDF), 2619–2639 (IPAG…TIFG), 2654–2674 (GACI…TAVY), 2754–2774 (GSDF…ISVF), 2787–2807 (ILFN…FTKF), 2814–2834 (MSVG…SYIV), and 2863–2883 (LGFL…VYAF). Residues 2528 to 2883 (FFWFLCLFIV…PWWVLMVYAF (356 aa)) form an HD2 region. One can recognise a Nsp4C domain in the interval 2902 to 2997 (LFEGDKFVGS…PTVSYNSTLQ (96 aa)). The region spanning 2998–3299 (AGLRKMAQPS…VRQMYGVNLQ (302 aa)) is the Peptidase C30 domain. Residues His3038 and Cys3141 each act as for 3CL-PRO activity in the active site. Transmembrane regions (helical) follow at residues 3336 to 3356 (GYVT…MFTL), 3361 to 3381 (LFFQ…NLAF), 3399 to 3419 (LMGF…VTIL), 3431 to 3451 (PASS…YFYA), 3454 to 3474 (ILSC…VGAV), 3476 to 3496 (YKVA…FGDI), and 3500 to 3520 (MFCY…LYWF). The tract at residues 3336-3520 (GYVTPMFACL…CCFYGILYWF (185 aa)) is HD3. Residues 3580 to 3662 (SKLTDIKCSN…SYFNDNSMLQ (83 aa)) enclose the RdRp Nsp7 cofactor domain. Residues 3663-3857 (SVASTYVGLP…LGCERIVKLQ (195 aa)) form the RdRp Nsp8 cofactor domain. The 108-residue stretch at 3858 to 3965 (NNEIIPGKLK…GYIGATVRLQ (108 aa)) folds into the Nsp9 ssRNA-binding domain. Residues 3966 to 4103 (AGKQTEQAIN…CDRSIMQSTD (138 aa)) enclose the ExoN/MTase coactivator domain. Zn(2+) contacts are provided by Cys4039, Cys4042, His4048, Cys4055, Cys4081, Cys4084, Cys4092, and Cys4094. Zinc fingers lie at residues 4039 to 4055 (CLYC…DGFC) and 4081 to 4094 (CKVC…GCTC). Positions 4106-4355 (YLNRVRGSSA…ASECFVKSDI (250 aa)) constitute a NiRAN domain. Positions 4361 to 4459 (KSYDLLEYDF…WNNDLNLHSS (99 aa)) constitute a Nsp12 Interface domain. Zn(2+) is bound by residues His4390, Cys4396, Cys4401, Cys4405, and Cys4582. The Nsp12 RNA-dependent RNA polymerase domain maps to 4460 to 5027 (RLSINELLQF…NMYEKSAVLQ (568 aa)). The segment at 4462-4676 (SINELLQFCS…HQKHLKSIVN (215 aa)) is rdRp Fingers N-ter. Positions 4677 to 4715 (TRGASVVIGTTKFYGGWDNMLKNLIDGVENPCLMGWDYP) are rdRp Palm N-ter. One can recognise a RdRp catalytic domain in the interval 4707–4869 (PCLMGWDYPK…CYNNDYASLG (163 aa)). The tract at residues 4716–4774 (KCDRALPNMIRMISAMILGSKHTTCCSSTDRFFRLCNELAQVLTEVVYSNGGFYLKPGG) is rdRp Fingers C-ter. Positions 4737, 4740, and 4741 each coordinate Zn(2+). The interval 4775 to 4910 (TTSGDATTAY…NKGPHEFCSQ (136 aa)) is rdRp Palm C-ter. Active-site for RNA-directed RNA polymerase activity residues include Ser4854, Asp4855, and Asp4856. The rdRp Thumb stretch occupies residues 4911 to 5027 (HTMQIVDKEG…NMYEKSAVLQ (117 aa)). Residues 5028–5140 (SAGLCVVCGS…EDFNRIATSD (113 aa)) enclose the CV ZBD domain. Zn(2+)-binding residues include Cys5032, Cys5035, Cys5043, Cys5046, Cys5053, Cys5056, His5060, His5066, Cys5077, Cys5082, Cys5099, and His5102. One can recognise a (+)RNA virus helicase ATP-binding domain in the interval 5275 to 5466 (STIHKLHPAF…MCALKPDVFL (192 aa)). Residue 5310–5317 (GPPGSGKS) coordinates ATP. The region spanning 5467–5636 (HKCYRCPAEI…EGCGLFKDCS (170 aa)) is the (+)RNA virus helicase C-terminal domain. The 215-residue stretch at 5696–5910 (LFCTRDFAMR…RCLAIHDCFV (215 aa)) folds into the ExoN domain. Residues Asp5714, Glu5716, and Glu5815 each act as for exoribonuclease activity in the active site. Residues Cys5831, Cys5833, Cys5849, His5852, His5880, Cys5884, and His5887 each contribute to the Zn(2+) site. Residues His5891 and Asp5896 each act as for exoribonuclease activity in the active site. Residue Cys5902 participates in Zn(2+) binding. The region spanning 5919-6140 (YPFIGNEAVI…NLWQTFSNNL (222 aa)) is the N7-MTase domain. 5954 to 5960 (DIGNPKG) serves as a coordination point for S-adenosyl-L-methionine. The gpppA-binding stretch occupies residues 6031–6045 (CNGGSLYVNNHAFHT). Zn(2+) contacts are provided by Cys6069, Cys6086, Cys6097, and His6100. In terms of domain architecture, Nsp15 N-terminal oligomerization spans 6142–6202 (GLENIAFNVL…NVAFELYAKR (61 aa)). The region spanning 6203-6320 (KVGLTPPITI…IYTRKNGKFE (118 aa)) is the AV-Nsp11N/CoV-Nsp15M domain. In terms of domain architecture, NendoU spans 6337 to 6477 (SPRSDMEKDF…KDHKLQTFYP (141 aa)). Residues His6367, His6382, and Lys6423 each act as for uridylate-specific endoribonuclease activity in the active site. A Nidovirus-type SAM-dependent 2'-O-MTase domain is found at 6481–6777 (ASEWKCGYSM…AICGFSNHLV (297 aa)). Active-site for 2'-O-methyltransferase residues include Lys6525, Asp6609, Lys6649, and Glu6682.

It belongs to the coronaviruses polyprotein 1ab family. As to quaternary structure, interacts with PL-PRO and nsp6. Monomer. Homodimer; disulfide-linked. In terms of assembly, interacts with nsp8 and nsp12 to form the replication-transcription complex (RTC): nsp12, nsp7, two subunits of nsp8, and up to two subunits of nsp13. Eight copies of nsp7 and eight copies of nsp8 assemble to form a heterohexadecamer dsRNA-encircling ring structure. As to quaternary structure, interacts with nsp7, nsp13 and nsp12 to form the replication-transcription complex (RTC): nsp12, nsp7, two subunits of nsp8, and up to two subunits of nsp13. Eight copies of nsp7 and eight copies of nsp8 assemble to form a heterohexadecamer dsRNA-encircling ring structure. Homodimer. In terms of assembly, forms a dodecamer and interacts with nsp14 and nsp16; these interactions enhance nsp14 and nsp16 enzymatic activities. Mn(2+) serves as cofactor. Specific enzymatic cleavages in vivo by its own proteases yield mature proteins. 3CL-PRO and PL-PRO proteinases are autocatalytically processed.

The protein localises to the host cytoplasm. It localises to the host nucleus. It is found in the host membrane. Its subcellular location is the host perinuclear region. The protein resides in the host endoplasmic reticulum. The protein localises to the host endoplasmic reticulum-Golgi intermediate compartment. The enzyme catalyses Thiol-dependent hydrolysis of ester, thioester, amide, peptide and isopeptide bonds formed by the C-terminal Gly of ubiquitin (a 76-residue protein attached to proteins as an intracellular targeting signal).. It carries out the reaction a 5'-end diphospho-ribonucleoside in mRNA + GTP + H(+) = a 5'-end (5'-triphosphoguanosine)-ribonucleoside in mRNA + diphosphate. The catalysed reaction is RNA(n) + a ribonucleoside 5'-triphosphate = RNA(n+1) + diphosphate. It catalyses the reaction ATP + H2O = ADP + phosphate + H(+). The enzyme catalyses a 5'-end (5'-triphosphoguanosine)-ribonucleoside in mRNA + S-adenosyl-L-methionine = a 5'-end (N(7)-methyl 5'-triphosphoguanosine)-ribonucleoside in mRNA + S-adenosyl-L-homocysteine. It carries out the reaction uridylyl-uridylyl-ribonucleotide-RNA = a 3'-end uridylyl-2',3'-cyclophospho-uridine-RNA + a 5'-end dephospho-ribonucleoside-RNA. The catalysed reaction is a 5'-end (N(7)-methyl 5'-triphosphoguanosine)-ribonucleoside in mRNA + S-adenosyl-L-methionine = a 5'-end (N(7)-methyl 5'-triphosphoguanosine)-(2'-O-methyl-ribonucleoside) in mRNA + S-adenosyl-L-homocysteine + H(+). Inhibited by the substrate-analog Cbz-Val-Asn-Ser-Thr-Leu-Gln-CMK. Inhibited by (R)-16. Its function is as follows. Multifunctional protein responsible for the transcription of negative stranded RNA, leader RNA, subgenomic mRNAs and progeny virion RNA as well as proteinases responsible for the cleavage of the polyprotein into functional products. Functionally, plays a role in the inhibition of host interferon and pro-inflammatory cytokines production. Suppresses host RELA/p65 activation by blocking NFKBIA phosphorylation. Targets also the RLR pathway downstream of the IRF3 activation by targeting host CREBBP to proteasomal degradation. In terms of biological role, responsible for the cleavages located at the N-terminus of the replicase polyprotein. Participates together with nsp4 in the assembly of virally-induced cytoplasmic double-membrane vesicles necessary for viral replication. Forms a molecular pore spanning the double membrane of the coronavirus replication organelle. In addition, PLP2 possesses a deubiquitinating/deISGylating activity and processes both 'Lys-48'- and 'Lys-63'-linked polyubiquitin chains from cellular substrates. PLP2 also antagonizes innate immune induction of type I interferon by blocking the nuclear translocation of host IRF-3. Participates in the inhibition of the integrated stress response (ISR) in the infected host cell. Participates in the assembly of virally-induced cytoplasmic double-membrane vesicles necessary for viral replication. Its function is as follows. Responsible for the majority of cleavages as it cleaves the C-terminus of replicase polyprotein at 11 sites. Recognizes substrates containing the core sequence [ILMVF]-Q-|-[SGACN]. Also contains an ADP-ribose-1''-phosphate (ADRP)-binding function. Participates in the inhibition of the integrated stress response (ISR) in the infected host cell. Functionally, plays a role in the initial induction of autophagosomes from host endoplasmic reticulum. Later, limits the expansion of these phagosomes that are no longer able to deliver viral components to lysosomes. In terms of biological role, plays a role in viral RNA synthesis. Forms a hexadecamer with nsp8 (8 subunits of each) that may participate in viral replication by acting as a primase. Alternatively, may synthesize substantially longer products than oligonucleotide primers. Plays a role in viral RNA synthesis. Forms a hexadecamer with nsp7 (8 subunits of each) that may participate in viral replication by acting as a primase. Alternatively, may synthesize substantially longer products than oligonucleotide primers. Its function is as follows. Forms a primer, NSP9-pU, which is utilized by the polymerase for the initiation of RNA chains. Interacts with ribosome signal recognition particle RNA (SRP). Together with NSP8, suppress protein integration into the cell membrane, thereby disrupting host immune defenses. Functionally, plays a pivotal role in viral transcription by stimulating both nsp14 3'-5' exoribonuclease and nsp16 2'-O-methyltransferase activities. Therefore plays an essential role in viral mRNAs cap methylation. In terms of biological role, RNA-directed RNA polymerase that catalyzes the transcription of viral genomic and subgenomic RNAs. Acts in complex with nsp7 and nsp8 to transcribe both the minus and positive strands of genomic RNA. The kinase-like NiRAN domain of NSP12 attaches one or more nucleotides to the amino terminus of NSP9, forming a covalent RNA-protein intermediate that serves as transcription/replication primer. Subgenomic RNAs (sgRNAs) are formed by discontinuous transcription: The polymerase has the ability to pause at transcription-regulating sequences (TRS) and jump to the leader TRS, resulting in a major deletion. This creates a series of subgenomic RNAs that are replicated, transcribed and translated. In addition, Nsp12 is a subunit of the viral RNA capping enzyme that catalyzes the RNA guanylyltransferase reaction for genomic and sub-genomic RNAs. Subsequently, the NiRAN domain transfers RNA to GDP, and forms the core cap structure GpppA-RNA. Plays a role in viral RNA synthesis. Multi-functional protein with a zinc-binding domain in N-terminus displaying RNA and DNA duplex-unwinding activities with 5' to 3' polarity. ATPase activity is strongly stimulated by poly(U), poly(dT), poly(C), poly(dA), but not by poly(G). Its function is as follows. Plays a role in viral RNA synthesis through two distinct activities. The N7-guanine methyltransferase activity plays a role in the formation of the cap structure GpppA-RNA. The proofreading exoribonuclease reduces the sensitivity of the virus to RNA mutagens during replication. This activity acts on both ssRNA and dsRNA in a 3'-5' direction. Functionally, plays a role in viral transcription/replication and prevents the simultaneous activation of host cell dsRNA sensors, such as MDA5/IFIH1, OAS, and PKR. Acts by degrading the 5'-polyuridines generated during replication of the poly(A) region of viral genomic and subgenomic RNAs. Catalyzes a two-step reaction in which a 2'3'-cyclic phosphate (2'3'-cP) is first generated by 2'-O transesterification, which is then hydrolyzed to a 3'-phosphate (3'-P). If not degraded, poly(U) RNA would hybridize with poly(A) RNA tails and activate host dsRNA sensors. Decreases the RNA levels and thus the expression of host TBK1 and IRF3, antagonizing the host innate response. The polypeptide is Replicase polyprotein 1ab (rep) (Sus scrofa (Pig)).